The primary structure comprises 559 residues: Protein NRT1/ PTR FAMILY 2.8 (559 aa).

A run of 11 helical transmembrane segments spans residues 57–77 (GVFL…LTLA), 92–112 (LLLG…TAAL), 132–152 (KWQL…AGGV), 178–198 (FFNW…TGVV), 206–226 (WVIG…TFVI), 321–341 (LKCV…FILT), 374–394 (VSMI…IPIV), 404–424 (LTLK…VAGF), 437–457 (GSFV…LAGL), 481–501 (VAGA…TLLI), and 529–549 (YFFI…LFAS).

This sequence belongs to the major facilitator superfamily. Proton-dependent oligopeptide transporter (POT/PTR) (TC 2.A.17) family. As to expression, expressed in flowers.

It is found in the membrane. The polypeptide is Protein NRT1/ PTR FAMILY 2.8 (NPF2.8) (Arabidopsis thaliana (Mouse-ear cress)).